The primary structure comprises 382 residues: Methenyltetrahydrofolate synthase domain-containing protein (382 aa).

An RRM domain is found at 306 to 382 (TTVYLSDIPP…QAKCVSSQKM (77 aa)).

The protein is Methenyltetrahydrofolate synthase domain-containing protein (mthfsd) of Danio rerio (Zebrafish).